A 415-amino-acid polypeptide reads, in one-letter code: BTB/POZ and MATH domain-containing protein 6 (415 aa).

The disordered stretch occupies residues 1-33 (MSKLMTRTSGSSSPNTIPDQIESPTSSRSVTQT). The MATH domain occupies 35–169 (NGSHQFVIQG…DDCLKINCTV (135 aa)). One can recognise a BTB domain in the interval 205–271 (SDVTFDVAGE…MYKDSLPGDV (67 aa)). The interval 385-415 (SSSGGGKSQSVWAQLSNGGETSSRRVRQRTT) is disordered. Over residues 392-405 (SQSVWAQLSNGGET) the composition is skewed to polar residues.

This sequence belongs to the Tdpoz family. In terms of assembly, heterodimer with BPM1. Interacts with RAP2-4. Interacts with CUL3A. Binds to MYB56 at the promoter of FLOWERING LOCUS T (FT). As to expression, ubiquitous.

The protein resides in the nucleus. It is found in the cytoplasm. It participates in protein modification; protein ubiquitination. May act as a substrate-specific adapter of an E3 ubiquitin-protein ligase complex (CUL3-RBX1-BTB) which mediates the ubiquitination and subsequent proteasomal degradation of target proteins. In Arabidopsis thaliana (Mouse-ear cress), this protein is BTB/POZ and MATH domain-containing protein 6 (BPM6).